The sequence spans 187 residues: Transcriptional repressor NrdR (187 aa).

A zinc finger spans residues 3 to 34 (CPFCRHPDSRVVDSRTTDDGTSIRRRRQCPDC). One can recognise an ATP-cone domain in the interval 46–136 (LMVVKRSGVT…VYRAFDSLED (91 aa)). Residues 146 to 187 (EEQRERPAVDDEDHEDAGAERQGTDRGSGGTVEVPVPATVAD) form a disordered region.

The protein belongs to the NrdR family. The cofactor is Zn(2+).

Functionally, negatively regulates transcription of bacterial ribonucleotide reductase nrd genes and operons by binding to NrdR-boxes. The polypeptide is Transcriptional repressor NrdR (Streptomyces avermitilis (strain ATCC 31267 / DSM 46492 / JCM 5070 / NBRC 14893 / NCIMB 12804 / NRRL 8165 / MA-4680)).